Here is a 257-residue protein sequence, read N- to C-terminus: Capsid protein (257 aa).

Residues 3-20 (KRTGDILISTPVSKVRRK) carry the Bipartite nuclear localization signal motif. The Nuclear localization signal signature appears at 40–54 (KRRSWTYRPMYRKPR). Residues 68-85 (CEGPCKVQSYEQRDDVKH) fold into a zinc finger. A Nuclear export signal motif is present at residues 101-122 (ITHRVGKRFCIKSIYILGKIWM). Residues 201–248 (KRFFKVNTHVVYNHQEQAKYENHTENALLLYMACTHASNPVYATLKIR) carry the Bipartite nuclear localization signal motif.

Belongs to the geminiviridae capsid protein family. As to quaternary structure, homomultimer. Binds to single-stranded and double-stranded viral DNA. Interacts (via nuclear localization signals) with host importin alpha-1a.

The protein resides in the virion. Its subcellular location is the host nucleus. In terms of biological role, encapsidates the viral genome into characteristic twinned ('geminate') particles. Binds the genomic viral ssDNA and shuttles it into and out of the cell nucleus. Plays a role in protection of the genome from degradation, virus acquisition and transmission by insect vectors, infectivity, and systemic movement. The CP of monopartite geminiviruses is absolutely essential for virus movement. This chain is Capsid protein, found in Tomato yellow leaf curl Sardinia virus (isolate Spain-1) (TYLCSV).